Here is a 542-residue protein sequence, read N- to C-terminus: Chaperonin GroEL 3 (542 aa).

ATP contacts are provided by residues 29–32 (TLGP), 86–90 (DGTTT), G413, 477–479 (NAA), and D493.

Belongs to the chaperonin (HSP60) family. Forms a cylinder of 14 subunits composed of two heptameric rings stacked back-to-back. Interacts with the co-chaperonin GroES.

Its subcellular location is the cytoplasm. The enzyme catalyses ATP + H2O + a folded polypeptide = ADP + phosphate + an unfolded polypeptide.. Functionally, together with its co-chaperonin GroES, plays an essential role in assisting protein folding. The GroEL-GroES system forms a nano-cage that allows encapsulation of the non-native substrate proteins and provides a physical environment optimized to promote and accelerate protein folding. The sequence is that of Chaperonin GroEL 3 from Frankia alni (strain DSM 45986 / CECT 9034 / ACN14a).